Here is a 258-residue protein sequence, read N- to C-terminus: PF03932 family protein CutC (258 aa).

This sequence belongs to the CutC family.

Its subcellular location is the cytoplasm. The protein is PF03932 family protein CutC of Mesorhizobium japonicum (strain LMG 29417 / CECT 9101 / MAFF 303099) (Mesorhizobium loti (strain MAFF 303099)).